We begin with the raw amino-acid sequence, 120 residues long: UPF0102 protein PTH_1707 (120 aa).

The protein belongs to the UPF0102 family.

This chain is UPF0102 protein PTH_1707, found in Pelotomaculum thermopropionicum (strain DSM 13744 / JCM 10971 / SI).